A 75-amino-acid polypeptide reads, in one-letter code: SPbeta prophage-derived uncharacterized protein YomT (75 aa).

In Bacillus subtilis (strain 168), this protein is SPbeta prophage-derived uncharacterized protein YomT (yomT).